The following is a 262-amino-acid chain: Probable carboxylesterase Culp3 (262 aa).

Positions 1–41 (MNNRPIRLLTSGRAGLGAGALITAVVLLIALGAVWTLVAFA) are cleaved as a signal peptide. Cys-44 and Cys-114 are oxidised to a cystine. The active-site Nucleophile is Ser-125. An intrachain disulfide couples Cys-188 to Cys-195. Asp-192 is an active-site residue. Catalysis depends on His-206, which acts as the Proton donor/acceptor. The disordered stretch occupies residues 241–262 (LPGSVLQMPGTAAPAPESLHGR).

It belongs to the cutinase family.

It localises to the secreted. This is Probable carboxylesterase Culp3 (cut3) from Mycobacterium tuberculosis (strain CDC 1551 / Oshkosh).